A 478-amino-acid chain; its full sequence is Glutamine synthetase (478 aa).

Residue K14 forms an Isoglutamyl lysine isopeptide (Lys-Gln) (interchain with Q-Cter in protein Pup) linkage. Residues 16–100 (ENVEYVDIRF…MNFFVHDPFT (85 aa)) form the GS beta-grasp domain. The GS catalytic domain maps to 108–478 (PRNVARKAEN…PYEFSLYYDV (371 aa)). E133 and E135 together coordinate Mg(2+). E214 is a binding site for ATP. Residues E219 and E227 each coordinate Mg(2+). 230–232 (YKF) lines the ATP pocket. L-glutamate-binding positions include 271–272 (NG) and G272. Position 276 (H276) interacts with Mg(2+). ATP-binding positions include 278 to 280 (HQS) and S280. Residues R329, E335, and R347 each contribute to the L-glutamate site. Residues R347, R352, and K361 each coordinate ATP. Residue E366 participates in Mg(2+) binding. R368 is a binding site for L-glutamate. The residue at position 406 (Y406) is an O-AMP-tyrosine.

This sequence belongs to the glutamine synthetase family. As to quaternary structure, oligomer of 12 subunits arranged in the form of two hexagons. It depends on Mg(2+) as a cofactor.

The protein localises to the cytoplasm. The catalysed reaction is L-glutamate + NH4(+) + ATP = L-glutamine + ADP + phosphate + H(+). Its activity is regulated as follows. When cellular nitrogen levels are high, the C-terminal adenylyl transferase (AT) of GlnE inhibits GlnA by covalent transfer of an adenylyl group from ATP to Tyr-406. Conversely, when nitrogen levels are low, the N-terminal adenylyl removase (AR) of GlnE activates GlnA by removing the adenylyl group by phosphorolysis. The fully adenylated enzyme complex is inactive. Functionally, involved in nitrogen metabolism via ammonium assimilation. Catalyzes the ATP-dependent biosynthesis of glutamine from glutamate and ammonia. The sequence is that of Glutamine synthetase from Mycolicibacterium smegmatis (strain ATCC 700084 / mc(2)155) (Mycobacterium smegmatis).